The sequence spans 344 residues: SUMO-activating enzyme subunit 1 (344 aa).

The protein belongs to the ubiquitin-activating E1 family. In terms of assembly, heterodimer of sae1 and uba2/sae2. The heterodimer corresponds to the two domains that are encoded on a single polypeptide chain in ubiquitin-activating enzyme E1. Interacts with ube2i.

The protein localises to the nucleus. It functions in the pathway protein modification; protein sumoylation. Functionally, the heterodimer acts as an E1 ligase for sumo1, sumo2, and sumo3. It mediates ATP-dependent activation of sumo proteins followed by formation of a thioester bond between a sumo protein and a conserved active site cysteine residue on uba2/sae2. The chain is SUMO-activating enzyme subunit 1 (sae1) from Xenopus laevis (African clawed frog).